A 203-amino-acid polypeptide reads, in one-letter code: MTLVPYVVEDTGRGERAMDIYSRLLKDRIVMIGQEITEPLANTVIAQLLFLMSEDPKKDIQIFINSPGGYITAGLAIYDTIRFLGCDVNTYCIGQAASMGALLLSAGTKGKRHALPHSRMMIHQPSGGIIGTSADIQLQAAEILTLKKHLANILSECTGQPVEKIIEDSERDFFMGAEEAISYGLIDKVVTSAKETNKDTSST.

The active-site Nucleophile is the Ser98. His123 is a catalytic residue.

This sequence belongs to the peptidase S14 family. Fourteen ClpP subunits assemble into 2 heptameric rings which stack back to back to give a disk-like structure with a central cavity, resembling the structure of eukaryotic proteasomes.

It is found in the cytoplasm. The catalysed reaction is Hydrolysis of proteins to small peptides in the presence of ATP and magnesium. alpha-casein is the usual test substrate. In the absence of ATP, only oligopeptides shorter than five residues are hydrolyzed (such as succinyl-Leu-Tyr-|-NHMec, and Leu-Tyr-Leu-|-Tyr-Trp, in which cleavage of the -Tyr-|-Leu- and -Tyr-|-Trp bonds also occurs).. In terms of biological role, cleaves peptides in various proteins in a process that requires ATP hydrolysis. Has a chymotrypsin-like activity. Plays a major role in the degradation of misfolded proteins. The sequence is that of ATP-dependent Clp protease proteolytic subunit 2 from Chlamydia pneumoniae (Chlamydophila pneumoniae).